The following is a 328-amino-acid chain: uncharacterized protein (328 aa).

An SIS domain is found at 37-179 (LTERLLCHQG…AMTVLRCRKI (143 aa)). 52-57 (GIGKSG) contacts ATP. CBS domains are found at residues 205 to 264 (LSPR…GGAI) and 273 to 328 (MTRK…AGLL).

This sequence belongs to the SIS family. GutQ/KpsF subfamily.

This is an uncharacterized protein from Chlamydia muridarum (strain MoPn / Nigg).